Reading from the N-terminus, the 414-residue chain is Glucose-1-phosphate adenylyltransferase (414 aa).

Residues G164, 181–182 (EK), and S199 contribute to the alpha-D-glucose 1-phosphate site.

The protein belongs to the bacterial/plant glucose-1-phosphate adenylyltransferase family. Homotetramer.

It carries out the reaction alpha-D-glucose 1-phosphate + ATP + H(+) = ADP-alpha-D-glucose + diphosphate. Its pathway is glycan biosynthesis; glycogen biosynthesis. Its function is as follows. Involved in the biosynthesis of ADP-glucose, a building block required for the elongation reactions to produce glycogen. Catalyzes the reaction between ATP and alpha-D-glucose 1-phosphate (G1P) to produce pyrophosphate and ADP-Glc. The polypeptide is Glucose-1-phosphate adenylyltransferase (Leifsonia xyli subsp. xyli (strain CTCB07)).